The primary structure comprises 331 residues: Major outer membrane protein P.IB (331 aa).

The first 19 residues, M1–A19, serve as a signal peptide directing secretion.

This sequence belongs to the Gram-negative porin family. As to quaternary structure, homotrimer.

The protein localises to the cell outer membrane. Its function is as follows. Serves as a slightly cation selective porin. The polypeptide is Major outer membrane protein P.IB (porB) (Neisseria meningitidis serogroup B (strain ATCC BAA-335 / MC58)).